We begin with the raw amino-acid sequence, 360 residues long: Probable cinnamyl alcohol dehydrogenase 9 (360 aa).

Cys50 contributes to the Zn(2+) binding site. Thr52 contributes to the NADP(+) binding site. His72, Glu73, Cys103, Cys106, Cys109, Cys117, and Cys166 together coordinate Zn(2+). NADP(+)-binding positions include Thr170, 191-196 (GLGGLG), 214-219 (SSSSTK), Thr254, Gly278, and 301-303 (SDV).

It belongs to the zinc-containing alcohol dehydrogenase family. Homodimer. Zn(2+) is required as a cofactor. As to expression, expressed in the vasculature of the primary root and elongation regions. Expressed in the hypocotyl, cotyledon veins, vasculature of the first rosette leaves, and hydathodes. In stems, expressed in the vascular cambium, interfascicular cambium, developing xylem, and phloem. Expressed in the entire floral organs at late developing stage, and in the abscission, style and stigmatic regions of siliques and seed funicules.

It carries out the reaction (E)-cinnamyl alcohol + NADP(+) = (E)-cinnamaldehyde + NADPH + H(+). The protein operates within aromatic compound metabolism; phenylpropanoid biosynthesis. Its function is as follows. Involved in lignin biosynthesis. May catalyze the final step specific for the production of lignin monomers, like coniferyl alcohol, sinapyl alcohol and 4-coumaryl alcohol. The protein is Probable cinnamyl alcohol dehydrogenase 9 (CAD9) of Arabidopsis thaliana (Mouse-ear cress).